A 355-amino-acid polypeptide reads, in one-letter code: Peptide chain release factor 1 (355 aa).

Position 230 is an N5-methylglutamine (Q230).

Belongs to the prokaryotic/mitochondrial release factor family. In terms of processing, methylated by PrmC. Methylation increases the termination efficiency of RF1.

It localises to the cytoplasm. Its function is as follows. Peptide chain release factor 1 directs the termination of translation in response to the peptide chain termination codons UAG and UAA. This Geobacter metallireducens (strain ATCC 53774 / DSM 7210 / GS-15) protein is Peptide chain release factor 1.